The chain runs to 215 residues: Ras-related protein Rab-5B (215 aa).

Thr2 carries the post-translational modification N-acetylthreonine. GTP is bound by residues Ser29, Ala30, Gly32, Lys33, Ser34, Ser35, His46, Glu47, Thr52, and Gly78. Ser34 serves as a coordination point for Mg(2+). 2 consecutive short sequence motifs (switch) follow at residues 44-56 (QFHE…IGAA) and 77-93 (AGQE…YRGA). Position 52 (Thr52) interacts with Mg(2+). Ser84 is modified (phosphoserine; by LRRK2). Positions 133, 134, 136, 164, and 165 each coordinate GTP. Positions 186–215 (PQNLGGAAGRSRGVDLHEQSQQNKSQCCSN) are disordered. The segment covering 204 to 215 (QSQQNKSQCCSN) has biased composition (low complexity). S-geranylgeranyl cysteine attachment occurs at residues Cys212 and Cys213.

This sequence belongs to the small GTPase superfamily. Rab family. Binds EEA1. Interacts with RIN2 and RIN3, which probably regulate its pathway, possibly by acting as GEFs. Interacts with GDI1, GDI2, CHML and CHM; phosphorylation at Ser-84 disrupts this interaction. It depends on Mg(2+) as a cofactor. Phosphorylation of Ser-84 in the switch II region by LRRK2 prevents the association of RAB regulatory proteins, including CHM, CHML and RAB GDP dissociation inhibitors GDI1 and GDI2. In terms of processing, (Microbial infection) Glycosylated on arginine residues by S.typhimurium protein Ssek3.

The protein resides in the cell membrane. It is found in the early endosome membrane. The protein localises to the melanosome. It carries out the reaction GTP + H2O = GDP + phosphate + H(+). Regulated by guanine nucleotide exchange factors (GEFs) which promote the exchange of bound GDP for free GTP. Regulated by GTPase activating proteins (GAPs) which increase the GTP hydrolysis activity. Inhibited by GDP dissociation inhibitors (GDIs). The small GTPases Rab are key regulators of intracellular membrane trafficking, from the formation of transport vesicles to their fusion with membranes. Rabs cycle between an inactive GDP-bound form and an active GTP-bound form that is able to recruit to membranes different sets of downstream effectors directly responsible for vesicle formation, movement, tethering and fusion. The chain is Ras-related protein Rab-5B from Homo sapiens (Human).